The sequence spans 174 residues: NADH-quinone oxidoreductase subunit B 2 (174 aa).

[4Fe-4S] cluster contacts are provided by Cys-53, Cys-54, Cys-118, and Cys-148.

The protein belongs to the complex I 20 kDa subunit family. As to quaternary structure, NDH-1 is composed of 14 different subunits. Subunits NuoB, C, D, E, F, and G constitute the peripheral sector of the complex. It depends on [4Fe-4S] cluster as a cofactor.

Its subcellular location is the cell inner membrane. The catalysed reaction is a quinone + NADH + 5 H(+)(in) = a quinol + NAD(+) + 4 H(+)(out). NDH-1 shuttles electrons from NADH, via FMN and iron-sulfur (Fe-S) centers, to quinones in the respiratory chain. Couples the redox reaction to proton translocation (for every two electrons transferred, four hydrogen ions are translocated across the cytoplasmic membrane), and thus conserves the redox energy in a proton gradient. This is NADH-quinone oxidoreductase subunit B 2 from Cereibacter sphaeroides (strain ATCC 17025 / ATH 2.4.3) (Rhodobacter sphaeroides).